The chain runs to 279 residues: ESX-1 secretion-associated protein EspG1 (279 aa).

This sequence belongs to the EspG family. As to quaternary structure, interacts specifically with ESX-1-dependent PE/PPE proteins.

It localises to the cytoplasm. Its function is as follows. Specific chaperone for cognate PE/PPE proteins. Plays an important role in preventing aggregation of PE/PPE dimers. The polypeptide is ESX-1 secretion-associated protein EspG1 (Mycobacterium marinum (strain ATCC BAA-535 / M)).